A 301-amino-acid polypeptide reads, in one-letter code: MRIAILSRNENLYSTSRLKAAGEARGHQVDVIDTLHCDIDIASNNPKIRYMGEELPQYDAVIPRIGASITFYGTAVVRQFEMMGTFCINESVAISRSRDKLRSLQLLSRKGIGLPKTGFASRPDKIQDLIKNVGGAPLVIKLLEGTQGIGVVLAETNKAAESVIEAFMGLKANILVQEFIEEANGADIRCFVVGNKVIAAMKRQAGEGEFRSNLHRGGTAQLVKLTKEERATAINAAKIMGLNLCGVDILQSKNGPVVMEVNSSPGLEGIEKSTGKDVADMIFEFIEKNAKPNANRTRGKG.

The ATP-grasp domain maps to leucine 104–glutamate 287. Residues lysine 141, glutamate 178–phenylalanine 179, aspartate 187, and arginine 211–asparagine 213 each bind ATP. Mg(2+) contacts are provided by aspartate 248, glutamate 260, and asparagine 262. The Mn(2+) site is built by aspartate 248, glutamate 260, and asparagine 262.

Belongs to the RimK family. The cofactor is Mg(2+). Requires Mn(2+) as cofactor.

The sequence is that of Probable alpha-L-glutamate ligase from Vibrio atlanticus (strain LGP32) (Vibrio splendidus (strain Mel32)).